We begin with the raw amino-acid sequence, 313 residues long: Methylenetetrahydrofolate dehydrogenase [NAD(+)] (313 aa).

Residue cysteine 152 is part of the active site. NAD(+) is bound by residues 187-188, 210-211, and 270-272; these read RS, DI, and FAG.

The protein belongs to the tetrahydrofolate dehydrogenase/cyclohydrolase family. Homodimer.

It carries out the reaction (6R)-5,10-methylene-5,6,7,8-tetrahydrofolate + NAD(+) = (6R)-5,10-methenyltetrahydrofolate + NADH. Its pathway is one-carbon metabolism; tetrahydrofolate interconversion. Its function is as follows. Catalyzes oxidation of cytoplasmic one-carbon units for purine biosynthesis. This is Methylenetetrahydrofolate dehydrogenase [NAD(+)] (thfA) from Dictyostelium discoideum (Social amoeba).